We begin with the raw amino-acid sequence, 265 residues long: Pyrroline-5-carboxylate reductase (265 aa).

It belongs to the pyrroline-5-carboxylate reductase family.

It localises to the cytoplasm. The enzyme catalyses L-proline + NADP(+) = (S)-1-pyrroline-5-carboxylate + NADPH + 2 H(+). The catalysed reaction is L-proline + NAD(+) = (S)-1-pyrroline-5-carboxylate + NADH + 2 H(+). The protein operates within amino-acid biosynthesis; L-proline biosynthesis; L-proline from L-glutamate 5-semialdehyde: step 1/1. In terms of biological role, catalyzes the reduction of 1-pyrroline-5-carboxylate (PCA) to L-proline. The protein is Pyrroline-5-carboxylate reductase of Aquifex aeolicus (strain VF5).